We begin with the raw amino-acid sequence, 473 residues long: ATP synthase subunit beta 2 (473 aa).

158 to 165 (GGAGVGKT) provides a ligand contact to ATP.

The protein belongs to the ATPase alpha/beta chains family. In terms of assembly, F-type ATPases have 2 components, CF(1) - the catalytic core - and CF(0) - the membrane proton channel. CF(1) has five subunits: alpha(3), beta(3), gamma(1), delta(1), epsilon(1). CF(0) has three main subunits: a(1), b(2) and c(9-12). The alpha and beta chains form an alternating ring which encloses part of the gamma chain. CF(1) is attached to CF(0) by a central stalk formed by the gamma and epsilon chains, while a peripheral stalk is formed by the delta and b chains.

Its subcellular location is the cell membrane. It catalyses the reaction ATP + H2O + 4 H(+)(in) = ADP + phosphate + 5 H(+)(out). Its function is as follows. Produces ATP from ADP in the presence of a proton gradient across the membrane. The catalytic sites are hosted primarily by the beta subunits. This Listeria welshimeri serovar 6b (strain ATCC 35897 / DSM 20650 / CCUG 15529 / CIP 8149 / NCTC 11857 / SLCC 5334 / V8) protein is ATP synthase subunit beta 2.